A 146-amino-acid chain; its full sequence is Alpha-amylase inhibitor BMAI-1 (146 aa).

The N-terminal stretch at 1-14 (PTSVAVDQGSMVSN) is a signal peptide. An N-linked (GlcNAc...) asparagine glycan is attached at Asn-125.

It belongs to the protease inhibitor I6 (cereal trypsin/alpha-amylase inhibitor) family. As to quaternary structure, monomer. Post-translationally, five disulfide bonds, which are essential for the inhibitor activity, are probably present. In terms of processing, glycosylated. As to expression, endosperm.

Its subcellular location is the secreted. Functionally, could be involved in insect defense mechanisms. Inhibits insect-type alpha-amylase. The protein is Alpha-amylase inhibitor BMAI-1 (IAM1) of Hordeum vulgare (Barley).